The following is a 269-amino-acid chain: Probable membrane transporter protein YfcA (269 aa).

Topologically, residues Met-1–Leu-7 are periplasmic. The chain crosses the membrane as a helical span at residues Phe-8–Ile-28. The Cytoplasmic portion of the chain corresponds to Asp-29–Ser-30. The helical transmembrane segment at Ile-31 to Ala-51 threads the bilayer. Topologically, residues Asn-52 to Lys-84 are periplasmic. A helical membrane pass occupies residues Leu-85 to Gln-105. At Ala-106–Gln-111 the chain is on the cytoplasmic side. Residues Ile-112–Glu-132 form a helical membrane-spanning segment. Topologically, residues Glu-133 to Asp-156 are periplasmic. A helical membrane pass occupies residues Gly-157 to Phe-177. The Cytoplasmic segment spans residues Asn-178–Gly-197. A helical membrane pass occupies residues Leu-198–Gly-218. The Periplasmic segment spans residues Gln-219–Asn-269.

The protein belongs to the 4-toluene sulfonate uptake permease (TSUP) (TC 2.A.102) family.

Its subcellular location is the cell inner membrane. The chain is Probable membrane transporter protein YfcA (yfcA) from Escherichia coli O157:H7.